The primary structure comprises 748 residues: Catalase-peroxidase (748 aa).

Polar residues predominate over residues 1-16 (MSSDTSASRPPQPDTR). The segment at 1 to 43 (MSSDTSASRPPQPDTRTASKSESENPAIPSPHPKSNAPLTNRD) is disordered. The segment at residues 113-238 (WHAAGTYRIH…YGATTMGLIY (126 aa)) is a cross-link (tryptophyl-tyrosyl-methioninium (Trp-Tyr) (with M-264)). The active-site Proton acceptor is H114. The segment at residues 238–264 (YVNPEGPEGKPDPIAAAIDIRETFGRM) is a cross-link (tryptophyl-tyrosyl-methioninium (Tyr-Met) (with W-113)). H279 lines the heme b pocket.

This sequence belongs to the peroxidase family. Peroxidase/catalase subfamily. As to quaternary structure, homodimer or homotetramer. The cofactor is heme b. Post-translationally, formation of the three residue Trp-Tyr-Met cross-link is important for the catalase, but not the peroxidase activity of the enzyme.

It catalyses the reaction H2O2 + AH2 = A + 2 H2O. The enzyme catalyses 2 H2O2 = O2 + 2 H2O. Bifunctional enzyme with both catalase and broad-spectrum peroxidase activity. The sequence is that of Catalase-peroxidase from Mycolicibacterium paratuberculosis (strain ATCC BAA-968 / K-10) (Mycobacterium paratuberculosis).